The primary structure comprises 1216 residues: MGKLIRMGAQERRSLWPKRLHWSRPLFLLGMLIIGSTYQYLTSPQGLPTLWAAVSSQHPVKVASRDLSNKEMMMVSSETSKSSSEMEVEAWAPEATAGRDGTPPGIARKNTPSTPRGTASITPAIPNNYSPTPTGTGKVKEDTSATPSGVLNHYTQSRPMVNSYTRLTARGEVKSSRPTQSRGKEEKYSPSPLGRMVNSYAPSTLMTMPRSHGITPRTTVKDREIMATKKMLATNPSKRLVEKTTPTPLKGITDNTPTFLLSDLETDTLTSPRNVVEKKTLTTPRRVDSNSSTNHQGLVGKNNLTTPQGMVLEHTAAVSEGQVTISTMTRSSPTETKASTDAWKVRNPLPRTSAPIIRISSATFRGLLKNPSKAPSTPAAPRVRANPTIQVRHCLVVEPAPVAPTAPSPSWTTAVIPGIPSPSGQPDLYPKAEYPRDLFSVEERRQGWVVLHIFGMMYVFVALAIVCDEYFVPALGVITDKLQISEDVAGATFMAAGGSAPELFTSLIGVFISHSNVGIGTIVGSAVFNILFVIGTCALFSREILNLTWWPLFRDITFYIFDLMMLILFFLDSLIAWWESVLLLLAYAFYVFTMKWNQQLELWVKEQLNKRPVAKVMALGDLSKPGDGTVVVDEQQDNKKLKLSSMLTRGSSSASLHNSTIRSTIYQLMLHSLDPLGEARPSKDKEEETLIPEAKATPQAKAESKPEEEPAKLPEVTVTPAPAPDVKGDQEEDPGSQGVGAEAENTGERTGGEAEAPAEGENGERSGGDAALGGESEGKAENESEGDIPAERRGDDEDEGEIQAEGGEVKGDEDEGEIQAGEGGEVEGDEDEGEIQAGEGGEVEGDEDEGEIQAGEAGEVEGDEDEGEIQAGEGGEVEGDEDEGEIQAGEAGEVEGDEDEGEIQAGEGGEVKGDEGEIQAGEAGEVEGEDGEVEGGEDEGEIQAGEGGEGETGEQELNAEIQGEAKDDEEGVDGEGGGDGGDSEDEEEEDEEEEDEEEEEEEEEEEEEENEQPLSLEWPETRRKQAIYLFLLPIVFPLWLTVPDVRRLEAKKFFVITFLGSILWIAMFSYLMVWWAHQVGETIGISEEIMGLTILAAGTSIPDLITSVIVARKGLGDMAVSSSVGSNIFDITVGLPLPWMLFSLINGLQPVAVSSNGLFCAIVLLFLMLLFVISSIALCKWRMNKILGFTMFLLYFVFLIISVMLEDRIISCPVSV.

Topologically, residues 1–446 are extracellular; the sequence is MGKLIRMGAQ…DLFSVEERRQ (446 aa). The segment at 94 to 196 is disordered; the sequence is EATAGRDGTP…KYSPSPLGRM (103 aa). Composition is skewed to polar residues over residues 110–135 and 144–166; these read NTPS…TPTG and SATP…SYTR. N-linked (GlcNAc...) asparagine glycosylation is found at Asn290 and Asn303. Residues 447-467 traverse the membrane as a helical segment; it reads GWVVLHIFGMMYVFVALAIVC. Residues 468–491 lie on the Cytoplasmic side of the membrane; sequence DEYFVPALGVITDKLQISEDVAGA. Residues 488 to 528 form an Alpha-1 repeat; the sequence is VAGATFMAAGGSAPELFTSLIGVFISHSNVGIGTIVGSAVF. The helical transmembrane segment at 492–512 threads the bilayer; that stretch reads TFMAAGGSAPELFTSLIGVFI. Residues 513 to 518 lie on the Extracellular side of the membrane; the sequence is SHSNVG. The chain crosses the membrane as a helical span at residues 519–539; it reads IGTIVGSAVFNILFVIGTCAL. The Cytoplasmic segment spans residues 540 to 557; the sequence is FSREILNLTWWPLFRDIT. The helical transmembrane segment at 558 to 578 threads the bilayer; that stretch reads FYIFDLMMLILFFLDSLIAWW. Residue Glu579 is a topological domain, extracellular. The helical transmembrane segment at 580–600 threads the bilayer; it reads SVLLLLAYAFYVFTMKWNQQL. Over 601 to 1024 the chain is Cytoplasmic; sequence ELWVKEQLNK…SLEWPETRRK (424 aa). Ser652 is subject to Phosphoserine. The interval 677-1018 is disordered; it reads GEARPSKDKE…ENEQPLSLEW (342 aa). Residues 702-712 are compositionally biased toward basic and acidic residues; the sequence is AESKPEEEPAK. At Thr717 the chain carries Phosphothreonine. The 1; approximate repeat unit spans residues 796 to 811; sequence DEDEGEIQAEGGEVKG. Residues 796-928 are 8 X 17 AA tandem repeats of D-E-D-E-G-E-I-Q-A-G-E-[GA]-G-E-V-[EK]-G; the sequence is DEDEGEIQAE…QAGEAGEVEG (133 aa). 6 repeat units span residues 812-828, 829-845, 846-862, 863-879, 880-896, and 897-913. Composition is skewed to acidic residues over residues 824-834, 841-851, 858-868, 875-885, 892-902, 924-941, and 981-1011; these read GEVEGDEDEGE, GEVE…DEGE, and GDSE…EENE. An 8; approximate repeat occupies 914 to 928; the sequence is DEGEIQAGEAGEVEG. The chain crosses the membrane as a helical span at residues 1025-1045; the sequence is QAIYLFLLPIVFPLWLTVPDV. The Extracellular portion of the chain corresponds to 1046-1052; sequence RRLEAKK. Residues 1053–1073 form a helical membrane-spanning segment; that stretch reads FFVITFLGSILWIAMFSYLMV. Residues 1074–1088 lie on the Cytoplasmic side of the membrane; sequence WWAHQVGETIGISEE. Residues 1089–1109 form a helical membrane-spanning segment; the sequence is IMGLTILAAGTSIPDLITSVI. One copy of the Alpha-2 repeat lies at 1096–1127; it reads AAGTSIPDLITSVIVARKGLGDMAVSSSVGSN. The Extracellular portion of the chain corresponds to 1110–1127; that stretch reads VARKGLGDMAVSSSVGSN. The helical transmembrane segment at 1128–1148 threads the bilayer; sequence IFDITVGLPLPWMLFSLINGL. At 1149-1157 the chain is on the cytoplasmic side; sequence QPVAVSSNG. Residues 1158 to 1178 traverse the membrane as a helical segment; that stretch reads LFCAIVLLFLMLLFVISSIAL. The Extracellular segment spans residues 1179 to 1185; sequence CKWRMNK. A helical membrane pass occupies residues 1186–1206; sequence ILGFTMFLLYFVFLIISVMLE. The Cytoplasmic portion of the chain corresponds to 1207 to 1216; sequence DRIISCPVSV.

It belongs to the Ca(2+):cation antiporter (CaCA) (TC 2.A.19) family. SLC24A subfamily. The uncleaved signal sequence is required for efficient membrane targeting and proper membrane integration and topology. In terms of processing, glycosylated. In terms of tissue distribution, retina.

The protein resides in the cell membrane. The catalysed reaction is Ca(2+)(out) + K(+)(out) + 4 Na(+)(in) = Ca(2+)(in) + K(+)(in) + 4 Na(+)(out). In terms of biological role, calcium, potassium:sodium antiporter that transports 1 Ca(2+) and 1 K(+) in exchange for 4 Na(+). Critical component of the visual transduction cascade, controlling the calcium concentration of outer segments during light and darkness. Light causes a rapid lowering of cytosolic free calcium in the outer segment of both retinal rod and cone photoreceptors and the light-induced lowering of calcium is caused by extrusion via this protein which plays a key role in the process of light adaptation. In Bos taurus (Bovine), this protein is Sodium/potassium/calcium exchanger 1 (SLC24A1).